A 184-amino-acid polypeptide reads, in one-letter code: MSEREKITIENIVASTSLAEHLDLSRIALALDGSEYEPEQFPGLIYRLQDPKTAVLIFRSGKVNCTGAKNIEDVKRTIKIIIDKLKAANIEVYDDPDIIVQNIVAVYDLESELNLTDIAMSLGLENVEYEPEQFPGLVYRVEEPRVVLLLFGSGKVVCTGAKEESEIEQAVIKVKKELQKVGLI.

2 consecutive repeat copies span residues 9–85 (IENI…IDKL) and 100–178 (VQNI…KKEL).

It belongs to the TBP family.

General factor that plays a role in the activation of archaeal genes transcribed by RNA polymerase. Binds specifically to the TATA box promoter element which lies close to the position of transcription initiation. The chain is TATA-box-binding protein from Thermoplasma volcanium (strain ATCC 51530 / DSM 4299 / JCM 9571 / NBRC 15438 / GSS1).